A 129-amino-acid chain; its full sequence is MKSVQFCFLFCCWRAICCRSCELTNITITVEKEECGFCISINTTWCAGYCYTRDLVYRDPARPNIQKTCTFKELVYETVKVPGCAHHADSLYTYPVATECHCSKCDSDSTDCTVRGLGPSYCSFREIKE.

Positions 1-20 are cleaved as a signal peptide; that stretch reads MKSVQFCFLFCCWRAICCRS. 6 disulfide bridges follow: Cys-21–Cys-69, Cys-35–Cys-84, Cys-38–Cys-122, Cys-46–Cys-100, Cys-50–Cys-102, and Cys-105–Cys-112. Residues Asn-25 and Asn-42 are each glycosylated (N-linked (GlcNAc...) asparagine).

This sequence belongs to the glycoprotein hormones subunit beta family. Heterodimer. The active follitropin is a heterodimer composed of an alpha chain/CGA shared with other hormones and a unique beta chain/FSHB shown here.

It localises to the secreted. Together with the alpha chain CGA constitutes follitropin, the follicle-stimulating hormone, and provides its biological specificity to the hormone heterodimer. Binds FSHR, a G protein-coupled receptor, on target cells to activate downstream signaling pathways. Follitropin is involved in follicle development and spermatogenesis in reproductive organs. The protein is Follitropin subunit beta (FSHB) of Bos taurus (Bovine).